A 228-amino-acid polypeptide reads, in one-letter code: MKKLLLIAATSATVLSSALSFADCGNDSWYLRVDAGAAMFNKEKDNQTGLKLKSNTAFTGDIGVGNYIAENFRADLTLGTTFSGKLKKSGAVSSLGGANISASHKPNITRLLINGYVDLSNFEMFDVFAGAGIGASMLKEKVSFSGINSGATVSTSYSSKNTTNLAYKLTLGASSQISDGVKAELAYSWISDGKTKGGNVKLFGLGNKQVKGIRYQSHNLTAGLRFDI.

An N-terminal signal peptide occupies residues Met-1–Ala-22.

The chain is Putative adhesin RBE_1271 from Rickettsia bellii (strain RML369-C).